A 263-amino-acid polypeptide reads, in one-letter code: MRYLKRVVLYRIVMVLSVFIIGCDKSSDTSEKPKEDSKEAQIKKSFAKTLDMYPIENLEDFYDKEGYRDGEFKKDDKGTWLIRSEIVKQPKGKVMKTRGMQLYINRNTKTAKGFFVLKEISENNNRVNKDKEEKYEVKMVGNKIIPTEQINDEKIKKEIENFKFFVQYGNFKNFEKYNNGEFSYNPEAPIYSAKYQLHNDDYNVRQLRKRYEISTKEAPKLLLKGGGDLKDSSVGQNDIEFTFVERKGENIYFNDSVEFIPSK.

Residues 1-22 (MRYLKRVVLYRIVMVLSVFIIG) form the signal peptide. C23 is lipidated: N-palmitoyl cysteine. The S-diacylglycerol cysteine moiety is linked to residue C23.

The protein belongs to the staphylococcal tandem lipoprotein family.

It localises to the cell membrane. This is an uncharacterized protein from Staphylococcus aureus (strain bovine RF122 / ET3-1).